Consider the following 311-residue polypeptide: Ornithine carbamoyltransferase (311 aa).

Residues 52-55 (STRT), Q79, R103, and 129-132 (HPVQ) each bind carbamoyl phosphate. L-ornithine-binding positions include N167, D226, and 230–231 (SM). Carbamoyl phosphate is bound by residues 266 to 267 (CL) and R294.

It belongs to the aspartate/ornithine carbamoyltransferase superfamily. OTCase family.

It localises to the cytoplasm. The catalysed reaction is carbamoyl phosphate + L-ornithine = L-citrulline + phosphate + H(+). It functions in the pathway amino-acid biosynthesis; L-arginine biosynthesis; L-arginine from L-ornithine and carbamoyl phosphate: step 1/3. In terms of biological role, reversibly catalyzes the transfer of the carbamoyl group from carbamoyl phosphate (CP) to the N(epsilon) atom of ornithine (ORN) to produce L-citrulline. In Sorangium cellulosum (strain So ce56) (Polyangium cellulosum (strain So ce56)), this protein is Ornithine carbamoyltransferase.